We begin with the raw amino-acid sequence, 61 residues long: Small ribosomal subunit protein uS14 (61 aa).

Zn(2+) is bound by residues Cys24, Cys27, Cys40, and Cys43.

Belongs to the universal ribosomal protein uS14 family. Zinc-binding uS14 subfamily. Part of the 30S ribosomal subunit. Contacts proteins S3 and S10. The cofactor is Zn(2+).

Binds 16S rRNA, required for the assembly of 30S particles and may also be responsible for determining the conformation of the 16S rRNA at the A site. The sequence is that of Small ribosomal subunit protein uS14 from Halalkalibacterium halodurans (strain ATCC BAA-125 / DSM 18197 / FERM 7344 / JCM 9153 / C-125) (Bacillus halodurans).